The following is a 460-amino-acid chain: tRNA modification GTPase MnmE (460 aa).

The (6S)-5-formyl-5,6,7,8-tetrahydrofolate site is built by Arg-29, Glu-91, and Lys-132. Positions 227-383 (GISIALIGKT…LIDTIIKKCG (157 aa)) constitute a TrmE-type G domain. K(+) is bound at residue Asn-237. GTP contacts are provided by residues 237–242 (NVGKSS), 256–262 (TNIPGTT), and 281–284 (DTAG). Ser-241 contributes to the Mg(2+) binding site. K(+)-binding residues include Thr-256, Ile-258, and Thr-261. Thr-262 serves as a coordination point for Mg(2+). Lys-460 serves as a coordination point for (6S)-5-formyl-5,6,7,8-tetrahydrofolate.

This sequence belongs to the TRAFAC class TrmE-Era-EngA-EngB-Septin-like GTPase superfamily. TrmE GTPase family. In terms of assembly, homodimer. Heterotetramer of two MnmE and two MnmG subunits. Requires K(+) as cofactor.

It is found in the cytoplasm. Its function is as follows. Exhibits a very high intrinsic GTPase hydrolysis rate. Involved in the addition of a carboxymethylaminomethyl (cmnm) group at the wobble position (U34) of certain tRNAs, forming tRNA-cmnm(5)s(2)U34. The protein is tRNA modification GTPase MnmE of Prochlorococcus marinus (strain MIT 9312).